A 157-amino-acid polypeptide reads, in one-letter code: Crossover junction endodeoxyribonuclease RuvC (157 aa).

Active-site residues include D7, E67, and D139. 3 residues coordinate Mg(2+): D7, E67, and D139.

The protein belongs to the RuvC family. As to quaternary structure, homodimer which binds Holliday junction (HJ) DNA. The HJ becomes 2-fold symmetrical on binding to RuvC with unstacked arms; it has a different conformation from HJ DNA in complex with RuvA. In the full resolvosome a probable DNA-RuvA(4)-RuvB(12)-RuvC(2) complex forms which resolves the HJ. The cofactor is Mg(2+).

It is found in the cytoplasm. It catalyses the reaction Endonucleolytic cleavage at a junction such as a reciprocal single-stranded crossover between two homologous DNA duplexes (Holliday junction).. Functionally, the RuvA-RuvB-RuvC complex processes Holliday junction (HJ) DNA during genetic recombination and DNA repair. Endonuclease that resolves HJ intermediates. Cleaves cruciform DNA by making single-stranded nicks across the HJ at symmetrical positions within the homologous arms, yielding a 5'-phosphate and a 3'-hydroxyl group; requires a central core of homology in the junction. The consensus cleavage sequence is 5'-(A/T)TT(C/G)-3'. Cleavage occurs on the 3'-side of the TT dinucleotide at the point of strand exchange. HJ branch migration catalyzed by RuvA-RuvB allows RuvC to scan DNA until it finds its consensus sequence, where it cleaves and resolves the cruciform DNA. The protein is Crossover junction endodeoxyribonuclease RuvC of Prochlorococcus marinus (strain MIT 9301).